The primary structure comprises 180 residues: Vacuolar ATPase assembly protein VMA22 (180 aa).

Residues 4–38 (QALREELDSKCLQLLSDLEELEAKRAALNARVEEG) adopt a coiled-coil conformation. Residues 90 to 113 (TPEEVGPSEASLRRRKGPTKTKEL) are disordered.

As to quaternary structure, accessory component of the multisubunit proton-transporting vacuolar (V)-ATPase protein pump. Predominantly expressed in the heart, liver, kidney and testis and at lower levels in the brain and lung. Undetectable in the spleen and muscles.

It localises to the endosome. The protein resides in the lysosome. It is found in the endoplasmic reticulum-Golgi intermediate compartment. Its subcellular location is the cytoplasmic vesicle. The protein localises to the COPI-coated vesicle. It localises to the endoplasmic reticulum. In terms of biological role, accessory component of the proton-transporting vacuolar (V)-ATPase protein pump involved in intracellular iron homeostasis. In aerobic conditions, required for intracellular iron homeostasis, thus triggering the activity of Fe(2+) prolyl hydroxylase (PHD) enzymes, and leading to HIF1A hydroxylation and subsequent proteasomal degradation. Necessary for endolysosomal acidification and lysosomal degradation. May be involved in Golgi homeostasis. This Mus musculus (Mouse) protein is Vacuolar ATPase assembly protein VMA22 (Vma22).